A 156-amino-acid chain; its full sequence is ATP synthase subunit b (156 aa).

The helical transmembrane segment at 11-31 (LIAFALFVWFCMKFVWPPIIN) threads the bilayer.

It belongs to the ATPase B chain family. In terms of assembly, F-type ATPases have 2 components, F(1) - the catalytic core - and F(0) - the membrane proton channel. F(1) has five subunits: alpha(3), beta(3), gamma(1), delta(1), epsilon(1). F(0) has three main subunits: a(1), b(2) and c(10-14). The alpha and beta chains form an alternating ring which encloses part of the gamma chain. F(1) is attached to F(0) by a central stalk formed by the gamma and epsilon chains, while a peripheral stalk is formed by the delta and b chains.

The protein localises to the cell inner membrane. Functionally, f(1)F(0) ATP synthase produces ATP from ADP in the presence of a proton or sodium gradient. F-type ATPases consist of two structural domains, F(1) containing the extramembraneous catalytic core and F(0) containing the membrane proton channel, linked together by a central stalk and a peripheral stalk. During catalysis, ATP synthesis in the catalytic domain of F(1) is coupled via a rotary mechanism of the central stalk subunits to proton translocation. In terms of biological role, component of the F(0) channel, it forms part of the peripheral stalk, linking F(1) to F(0). The polypeptide is ATP synthase subunit b (Haemophilus influenzae (strain 86-028NP)).